We begin with the raw amino-acid sequence, 265 residues long: Mlc titration factor A (265 aa).

Zn(2+) contacts are provided by H111, H148, H152, and E211.

This sequence belongs to the MtfA family. As to quaternary structure, interacts with Mlc. Zn(2+) serves as cofactor.

The protein localises to the cytoplasm. Functionally, involved in the modulation of the activity of the glucose-phosphotransferase system (glucose-PTS). Interacts with the transcriptional repressor Mlc, preventing its interaction with DNA and leading to the modulation of expression of genes regulated by Mlc, including ptsG, which encodes the PTS system glucose-specific EIICB component. Its function is as follows. Shows zinc-dependent metallopeptidase activity. The protein is Mlc titration factor A of Salmonella agona (strain SL483).